The following is a 359-amino-acid chain: 4-hydroxy-3-methylbut-2-en-1-yl diphosphate synthase (flavodoxin) (359 aa).

The [4Fe-4S] cluster site is built by Cys-264, Cys-267, Cys-299, and Glu-306.

The protein belongs to the IspG family. Requires [4Fe-4S] cluster as cofactor.

The enzyme catalyses (2E)-4-hydroxy-3-methylbut-2-enyl diphosphate + oxidized [flavodoxin] + H2O + 2 H(+) = 2-C-methyl-D-erythritol 2,4-cyclic diphosphate + reduced [flavodoxin]. It functions in the pathway isoprenoid biosynthesis; isopentenyl diphosphate biosynthesis via DXP pathway; isopentenyl diphosphate from 1-deoxy-D-xylulose 5-phosphate: step 5/6. Its function is as follows. Converts 2C-methyl-D-erythritol 2,4-cyclodiphosphate (ME-2,4cPP) into 1-hydroxy-2-methyl-2-(E)-butenyl 4-diphosphate. This Helicobacter pylori (strain ATCC 700392 / 26695) (Campylobacter pylori) protein is 4-hydroxy-3-methylbut-2-en-1-yl diphosphate synthase (flavodoxin).